Here is a 160-residue protein sequence, read N- to C-terminus: Tic20 family protein (160 aa).

The next 4 helical transmembrane spans lie at 13–33, 53–73, 87–107, and 122–142; these read FFSA…GGFL, FYYQ…MAVV, MQAI…AYVI, and NFAF…SVLG.

The protein belongs to the Tic20 family.

It localises to the cell membrane. This is Tic20 family protein from Synechocystis sp. (strain ATCC 27184 / PCC 6803 / Kazusa).